Reading from the N-terminus, the 339-residue chain is Photosystem II assembly lipoprotein Ycf48 (339 aa).

The N-terminal stretch at 1–22 (MVIVKSWQKIFTLLVVLLLCIG) is a signal peptide. Residue C23 is the site of N-palmitoyl cysteine attachment. A lipid anchor (S-diacylglycerol cysteine) is attached at C23.

This sequence belongs to the Ycf48 family. Part of early PSII assembly complexes which includes D1 (psbA) and PsbI; not found in mature PSII. Binds to the lumenal side of PSII complexes. Interacts with YidC.

The protein resides in the cellular thylakoid membrane. Its function is as follows. A factor required for optimal assembly of photosystem II (PSII), acting in the early stages of PSII assembly. Also plays a role in replacement of photodamaged D1 (psbA). Assists YidC in synthesis of chlorophyll-binding proteins. The polypeptide is Photosystem II assembly lipoprotein Ycf48 (Nostoc sp. (strain PCC 7120 / SAG 25.82 / UTEX 2576)).